The chain runs to 275 residues: Large ribosomal subunit protein uL2 (275 aa).

The interval 219–263 (EVRGAAMNPRDHPHGGGEGRAPRGMPTPKTKWGKPARGVKTRHNP) is disordered. Residues 227 to 239 (PRDHPHGGGEGRA) are compositionally biased toward basic and acidic residues. A compositionally biased stretch (basic residues) spans 249 to 262 (KWGKPARGVKTRHN).

This sequence belongs to the universal ribosomal protein uL2 family. Part of the 50S ribosomal subunit. Forms a bridge to the 30S subunit in the 70S ribosome.

Functionally, one of the primary rRNA binding proteins. Required for association of the 30S and 50S subunits to form the 70S ribosome, for tRNA binding and peptide bond formation. It has been suggested to have peptidyltransferase activity; this is somewhat controversial. Makes several contacts with the 16S rRNA in the 70S ribosome. In Roseiflexus castenholzii (strain DSM 13941 / HLO8), this protein is Large ribosomal subunit protein uL2.